Consider the following 209-residue polypeptide: Kynurenine formamidase (209 aa).

Substrate is bound at residue Trp19. Residues His49, His53, and Asp55 each contribute to the Zn(2+) site. The active-site Proton donor/acceptor is His59. Zn(2+) is bound by residues His160 and Glu172.

This sequence belongs to the Cyclase 1 superfamily. KynB family. As to quaternary structure, homodimer. Requires Zn(2+) as cofactor.

It catalyses the reaction N-formyl-L-kynurenine + H2O = L-kynurenine + formate + H(+). It participates in amino-acid degradation; L-tryptophan degradation via kynurenine pathway; L-kynurenine from L-tryptophan: step 2/2. In terms of biological role, catalyzes the hydrolysis of N-formyl-L-kynurenine to L-kynurenine, the second step in the kynurenine pathway of tryptophan degradation. This is Kynurenine formamidase from Ralstonia nicotianae (strain ATCC BAA-1114 / GMI1000) (Ralstonia solanacearum).